Reading from the N-terminus, the 240-residue chain is UDP-2,3-diacylglucosamine hydrolase (240 aa).

The Mn(2+) site is built by D8, H10, D41, N78, and H113. 78 to 79 (NR) serves as a coordination point for substrate. D121, S159, N163, K166, and H194 together coordinate substrate. Mn(2+) contacts are provided by H194 and H196.

It belongs to the LpxH family. Mn(2+) serves as cofactor.

Its subcellular location is the cell inner membrane. The catalysed reaction is UDP-2-N,3-O-bis[(3R)-3-hydroxytetradecanoyl]-alpha-D-glucosamine + H2O = 2-N,3-O-bis[(3R)-3-hydroxytetradecanoyl]-alpha-D-glucosaminyl 1-phosphate + UMP + 2 H(+). It participates in glycolipid biosynthesis; lipid IV(A) biosynthesis; lipid IV(A) from (3R)-3-hydroxytetradecanoyl-[acyl-carrier-protein] and UDP-N-acetyl-alpha-D-glucosamine: step 4/6. Functionally, hydrolyzes the pyrophosphate bond of UDP-2,3-diacylglucosamine to yield 2,3-diacylglucosamine 1-phosphate (lipid X) and UMP by catalyzing the attack of water at the alpha-P atom. Involved in the biosynthesis of lipid A, a phosphorylated glycolipid that anchors the lipopolysaccharide to the outer membrane of the cell. The polypeptide is UDP-2,3-diacylglucosamine hydrolase (Shewanella baltica (strain OS223)).